A 315-amino-acid polypeptide reads, in one-letter code: Methionyl-tRNA formyltransferase (315 aa).

Residue 117–120 (SLLP) participates in (6S)-5,6,7,8-tetrahydrofolate binding.

The protein belongs to the Fmt family.

It carries out the reaction L-methionyl-tRNA(fMet) + (6R)-10-formyltetrahydrofolate = N-formyl-L-methionyl-tRNA(fMet) + (6S)-5,6,7,8-tetrahydrofolate + H(+). In terms of biological role, attaches a formyl group to the free amino group of methionyl-tRNA(fMet). The formyl group appears to play a dual role in the initiator identity of N-formylmethionyl-tRNA by promoting its recognition by IF2 and preventing the misappropriation of this tRNA by the elongation apparatus. The sequence is that of Methionyl-tRNA formyltransferase from Methylibium petroleiphilum (strain ATCC BAA-1232 / LMG 22953 / PM1).